An 822-amino-acid chain; its full sequence is Anaphase-promoting complex subunit 2 (822 aa).

Serine 218, serine 314, serine 470, serine 534, and serine 697 each carry phosphoserine. The disordered stretch occupies residues 450-495 (GDLAVELSKTDPASLETGQDSEDDSGEPEDWVPDPVDADPGKSSSK). Residues 468-481 (QDSEDDSGEPEDWV) are compositionally biased toward acidic residues. The cullin homology stretch occupies residues 502–700 (ISLLVSIYGS…LLRRRMSVWL (199 aa)). Phosphotyrosine is present on tyrosine 810.

This sequence belongs to the cullin family. The mammalian APC/C is composed at least of 14 distinct subunits ANAPC1, ANAPC2, CDC27/APC3, ANAPC4, ANAPC5, CDC16/APC6, ANAPC7, CDC23/APC8, ANAPC10, ANAPC11, CDC26/APC12, ANAPC13, ANAPC15 and ANAPC16 that assemble into a complex of at least 19 chains with a combined molecular mass of around 1.2 MDa; APC/C interacts with FZR1 and FBXO5. In the context of the APC/C complex, directly interacts with UBE2C and UBE2S. Interacts (via cullin domain) with ANAPC11 and with UBCH10. Interacts with NEUROD2. Interacts with FBXO43; the interaction is direct.

The protein operates within protein modification; protein ubiquitination. In terms of biological role, together with the RING-H2 protein ANAPC11, constitutes the catalytic component of the anaphase promoting complex/cyclosome (APC/C), a cell cycle-regulated E3 ubiquitin ligase that controls progression through mitosis and the G1 phase of the cell cycle. The APC/C complex acts by mediating ubiquitination and subsequent degradation of target proteins: it mainly mediates the formation of 'Lys-11'-linked polyubiquitin chains and, to a lower extent, the formation of 'Lys-48'- and 'Lys-63'-linked polyubiquitin chains. The APC/C complex catalyzes assembly of branched 'Lys-11'-/'Lys-48'-linked branched ubiquitin chains on target proteins. The CDC20-APC/C complex positively regulates the formation of synaptic vesicle clustering at active zone to the presynaptic membrane in postmitotic neurons. CDC20-APC/C-induced degradation of NEUROD2 drives presynaptic differentiation. This chain is Anaphase-promoting complex subunit 2 (ANAPC2), found in Homo sapiens (Human).